A 129-amino-acid chain; its full sequence is Large ribosomal subunit protein bL12c (129 aa).

It belongs to the bacterial ribosomal protein bL12 family. As to quaternary structure, homodimer. Part of the ribosomal stalk of the 50S ribosomal subunit. Forms a multimeric L10(L12)X complex, where L10 forms an elongated spine to which 2 to 4 L12 dimers bind in a sequential fashion. Binds GTP-bound translation factors.

Its subcellular location is the plastid. It localises to the chloroplast. Its function is as follows. Forms part of the ribosomal stalk which helps the ribosome interact with GTP-bound translation factors. Is thus essential for accurate translation. The sequence is that of Large ribosomal subunit protein bL12c from Porphyra purpurea (Red seaweed).